Consider the following 176-residue polypeptide: RING-H2 finger protein ATL14 (176 aa).

The segment at 1-26 (MSITIPYDGSISREPSPSPPPPKANT) is disordered. Residues 37–57 (FLIGLIMIPVAITAFIFILTS) form a helical membrane-spanning segment. The RING-type; atypical zinc finger occupies 115–157 (CVVCIDGFRQGQWCRKLPRCGHVFHRKCVDLWLIKVSTCPICR).

The protein belongs to the RING-type zinc finger family. ATL subfamily.

It localises to the membrane. It carries out the reaction S-ubiquitinyl-[E2 ubiquitin-conjugating enzyme]-L-cysteine + [acceptor protein]-L-lysine = [E2 ubiquitin-conjugating enzyme]-L-cysteine + N(6)-ubiquitinyl-[acceptor protein]-L-lysine.. It functions in the pathway protein modification; protein ubiquitination. The sequence is that of RING-H2 finger protein ATL14 (ATL14) from Arabidopsis thaliana (Mouse-ear cress).